The sequence spans 453 residues: Chromosomal replication initiator protein DnaA (453 aa).

The tract at residues 1 to 71 (MSEKEIWEKV…QAILFDVVGY (71 aa)) is domain I, interacts with DnaA modulators. The interval 71–114 (YEVKPHFITTEELANYSNNETATPKETTKPSTETTEDNHVLGRE) is domain II. The segment at 115–331 (QFNAHNTFDT…GALTRLLAYS (217 aa)) is domain III, AAA+ region. ATP is bound by residues G159, G161, K162, and T163. Residues 332 to 453 (QLLGKPITTE…ENLEKEIRNV (122 aa)) are domain IV, binds dsDNA.

This sequence belongs to the DnaA family. Oligomerizes as a right-handed, spiral filament on DNA at oriC.

It localises to the cytoplasm. In terms of biological role, plays an essential role in the initiation and regulation of chromosomal replication. ATP-DnaA binds to the origin of replication (oriC) to initiate formation of the DNA replication initiation complex once per cell cycle. Binds the DnaA box (a 9 base pair repeat at the origin) and separates the double-stranded (ds)DNA. Forms a right-handed helical filament on oriC DNA; dsDNA binds to the exterior of the filament while single-stranded (ss)DNA is stabiized in the filament's interior. The ATP-DnaA-oriC complex binds and stabilizes one strand of the AT-rich DNA unwinding element (DUE), permitting loading of DNA polymerase. After initiation quickly degrades to an ADP-DnaA complex that is not apt for DNA replication. Binds acidic phospholipids. This Staphylococcus aureus (strain bovine RF122 / ET3-1) protein is Chromosomal replication initiator protein DnaA.